A 184-amino-acid chain; its full sequence is GTP cyclohydrolase 1 (184 aa).

Zn(2+) is bound by residues C75, H78, and C146.

This sequence belongs to the GTP cyclohydrolase I family. As to quaternary structure, toroid-shaped homodecamer, composed of two pentamers of five dimers.

It catalyses the reaction GTP + H2O = 7,8-dihydroneopterin 3'-triphosphate + formate + H(+). It functions in the pathway cofactor biosynthesis; 7,8-dihydroneopterin triphosphate biosynthesis; 7,8-dihydroneopterin triphosphate from GTP: step 1/1. The chain is GTP cyclohydrolase 1 from Chromohalobacter salexigens (strain ATCC BAA-138 / DSM 3043 / CIP 106854 / NCIMB 13768 / 1H11).